The following is a 341-amino-acid chain: 4-hydroxy-2-oxovalerate aldolase (341 aa).

Residues 9–259 (VRITEVCLRD…KLDIDLYKMM (251 aa)) enclose the Pyruvate carboxyltransferase domain. 17 to 18 (RD) lines the substrate pocket. D18 serves as a coordination point for Mn(2+). H21 acts as the Proton acceptor in catalysis. Positions 171 and 198 each coordinate substrate. H198 and H200 together coordinate Mn(2+). Residue Y289 coordinates substrate.

This sequence belongs to the 4-hydroxy-2-oxovalerate aldolase family.

The catalysed reaction is (S)-4-hydroxy-2-oxopentanoate = acetaldehyde + pyruvate. The protein is 4-hydroxy-2-oxovalerate aldolase of Bacillus cereus (strain ATCC 10987 / NRS 248).